Reading from the N-terminus, the 205-residue chain is Protein-L-isoaspartate O-methyltransferase (205 aa).

Ser52 is a catalytic residue.

This sequence belongs to the methyltransferase superfamily. L-isoaspartyl/D-aspartyl protein methyltransferase family.

The protein resides in the cytoplasm. It catalyses the reaction [protein]-L-isoaspartate + S-adenosyl-L-methionine = [protein]-L-isoaspartate alpha-methyl ester + S-adenosyl-L-homocysteine. In terms of biological role, catalyzes the methyl esterification of L-isoaspartyl residues in peptides and proteins that result from spontaneous decomposition of normal L-aspartyl and L-asparaginyl residues. It plays a role in the repair and/or degradation of damaged proteins. The sequence is that of Protein-L-isoaspartate O-methyltransferase from Gloeobacter violaceus (strain ATCC 29082 / PCC 7421).